Here is a 362-residue protein sequence, read N- to C-terminus: F-box protein At2g14710 (362 aa).

The 47-residue stretch at Met-1 to His-47 folds into the F-box domain.

The chain is F-box protein At2g14710 from Arabidopsis thaliana (Mouse-ear cress).